A 371-amino-acid chain; its full sequence is MGASVTTGLQMAAARPCIPACQRLLGSRAALPSFGRALSTQTGFASCRKTASAGPFVSLNHKRFAVRAMSAQGLPIDLRGKRAFIAGVADDNGYGWAIAKALAAAGAEILVGTWVPALNIFETSLRRGKFDESRKLPDGSLMEITKVYPLDAVFDSPEDVPDDVKANKRYAGSSNWTVKEVAETVKNDFGTIDILVHSLANGPEVKNSLLETSRKGYLAAVSASSYSFISLLQHFLPIMNPGGATISLTYIASERTIPGYGGGMSSAKAALESDTRVLAYEAGRKGKIRVNTISAGPLGSRAAKAIGFIEKMIEYSYVNAPLQKELLADEVGNTAAFLASPLASAITGSTIYVDNGLNTMGLALDSPTLST.

The transit peptide at 1–67 directs the protein to the chloroplast; the sequence is MGASVTTGLQ…SLNHKRFAVR (67 aa). NAD(+)-binding positions include Gly87, Tyr94, 151–152, 198–199, and Leu248; these read DA and SL. Active-site proton acceptor residues include Tyr250 and Tyr260. NAD(+) is bound by residues Lys268 and 298–302; that span reads LGSRA.

The protein belongs to the short-chain dehydrogenases/reductases (SDR) family. FabI subfamily. In terms of assembly, homotetramer.

It localises to the plastid. The protein localises to the chloroplast. It carries out the reaction a 2,3-saturated acyl-[ACP] + NAD(+) = a (2E)-enoyl-[ACP] + NADH + H(+). It participates in lipid metabolism; fatty acid biosynthesis. In terms of biological role, catalyzes the NAD-dependent reduction of a carbon-carbon double bond in an enoyl moiety that is covalently linked to an acyl carrier protein (ACP). Catalyzes the last reduction step in the de novo synthesis cycle of fatty acids. Involved in the elongation cycle of fatty acids which are used in lipid metabolism. Required for normal plant growth. This Oryza sativa subsp. japonica (Rice) protein is Enoyl-[acyl-carrier-protein] reductase [NADH] 2, chloroplastic.